Here is a 434-residue protein sequence, read N- to C-terminus: MPLRLEASSADFAPAFAALLAGKRESAQDVNDVVSAILADVRLRGDDALIDYTARFDKMTVSAEGLRFSDDEVDTAVALIEPALRDALALAAKRITRFHERQMPTAISFTDEDGVRLGQRWTAVSAAGLYVPGGLAAYPSSVLMNALPAKVAGVERLVMVVPTPAGRINPLVLAAAKLAGVDEIYRVGGAQAVAALAYGTRTIAPVDKIVGPGNAYVAAAKRQVFGTVGIDMIAGPSEILVVADGANDPDWIALDLLSQAEHDAAAQSILITDDRAFADRVERAVTDRLRTLSRTEIASASWRDHGAIILVGDLLRDAPALVDKVAPEHLELAVADPDALAARVRHAGAIFLGRYTPEAIGDYIAGPNHVLPTSRTARFSSGLGVLDFMKRTTLVGCGAESLGAIGPSAVRLARAEGLEAHGLSVAARMNRGWE.

Tyrosine 130, glutamine 191, and asparagine 214 together coordinate NAD(+). Residues serine 237, glutamine 259, and histidine 262 each contribute to the substrate site. Residues glutamine 259 and histidine 262 each contribute to the Zn(2+) site. Active-site proton acceptor residues include glutamate 328 and histidine 329. Residues histidine 329, aspartate 362, glutamate 416, and histidine 421 each contribute to the substrate site. Aspartate 362 contributes to the Zn(2+) binding site. Residue histidine 421 participates in Zn(2+) binding.

This sequence belongs to the histidinol dehydrogenase family. Zn(2+) is required as a cofactor.

The catalysed reaction is L-histidinol + 2 NAD(+) + H2O = L-histidine + 2 NADH + 3 H(+). Its pathway is amino-acid biosynthesis; L-histidine biosynthesis; L-histidine from 5-phospho-alpha-D-ribose 1-diphosphate: step 9/9. In terms of biological role, catalyzes the sequential NAD-dependent oxidations of L-histidinol to L-histidinaldehyde and then to L-histidine. The chain is Histidinol dehydrogenase from Rhodospirillum rubrum (strain ATCC 11170 / ATH 1.1.1 / DSM 467 / LMG 4362 / NCIMB 8255 / S1).